Here is a 440-residue protein sequence, read N- to C-terminus: Diels-Alderase mycB (440 aa).

An N-terminal signal peptide occupies residues 1–18 (MGYLVKLACGLLLPLATA). N-linked (GlcNAc...) asparagine glycans are attached at residues N80, N155, and N332.

Belongs to the Diels-Alderase family.

It catalyses the reaction (5S)-5-(2-methylpropyl)-3-[(2E,6R,8E,10E,12E)-6,8,10,12-tetramethyltetradeca-2,8,10,12-tetraenoyl]-2,5-dihydro-1H-pyrrol-2-one = (5S)-3-[(1S,2R,4aR,6R,8aS)-2-(but-2-en-2-yl)-3,4a,6-trimethyl-1,2,4a,5,6,7,8,8a-octahydronaphthalene-1-carbonyl]-5-(2-methylpropyl)-2,5-dihydro-1H-pyrrol-2-one. The enzyme catalyses (5Z)-5-(2-methylpropylidene)-3-[(2E,6R,8E,10E,12E)-6,8,10,12-tetramethyltetradeca-2,8,10,12-tetraenoyl]-2,5-dihydro-1H-pyrrol-2-one = myceliothermophin E. The protein operates within mycotoxin biosynthesis. Diels-Alderase; part of the gene cluster that mediates the biosynthesis of myceliothermophins, mycotoxins that contain a trans-fused decalin ring system connected to a conjugated 3-pyrrolin-2-one moiety and that have potential anti-tumor properties. The polyketide synthase module (PKS) of the PKS-NRPS mycA is responsible for the synthesis of the octaketide backbone. The downstream nonribosomal peptide synthetase (NRPS) module then amidates the carboxyl end of the octaketide with a leucine. A reductase-like domain (R) at the C-terminus catalyzes the reductive release of the polyketide-amino acid intermediate. Because mycA lacks a designated enoylreductase (ER) domain, the required activity is provided the enoyl reductase mycC. Following mycA-catalyzed construction and release of aminoacyl polyketide aldehyde, Knoevenagel condensation yields the expected ketone. This C18 keto acyclic precursor is the substrate of the Diels-Alderase mycB, that catalyzes the Diels-Alder cycloaddition to produce myceliothermophin E. A yet unknown oxygenase involved in the production of myceliothermophin A, via substitution with a hydroxyl group at the C21, has still to be identified. The polypeptide is Diels-Alderase mycB (Thermothelomyces thermophilus (strain ATCC 42464 / BCRC 31852 / DSM 1799) (Sporotrichum thermophile)).